A 107-amino-acid polypeptide reads, in one-letter code: Integration host factor subunit beta (107 aa).

The interval 56-107 is disordered; sequence RPARVGRNPKSGEKVQVPEKFVPHFKPGKELRERVDGRAGEPLKADDPDDER. The span at 82 to 101 shows a compositional bias: basic and acidic residues; the sequence is PGKELRERVDGRAGEPLKAD.

Belongs to the bacterial histone-like protein family. In terms of assembly, heterodimer of an alpha and a beta chain.

This protein is one of the two subunits of integration host factor, a specific DNA-binding protein that functions in genetic recombination as well as in transcriptional and translational control. In Burkholderia vietnamiensis (strain G4 / LMG 22486) (Burkholderia cepacia (strain R1808)), this protein is Integration host factor subunit beta.